Here is a 698-residue protein sequence, read N- to C-terminus: Elongation factor G 1 (698 aa).

The tr-type G domain maps to 8-290; it reads ERYRNIGIVA…AVVDYLPAPI (283 aa). GTP contacts are provided by residues 17 to 24, 88 to 92, and 142 to 145; these read AHVDAGKT, DTPGH, and NKMD.

It belongs to the TRAFAC class translation factor GTPase superfamily. Classic translation factor GTPase family. EF-G/EF-2 subfamily.

It is found in the cytoplasm. Its function is as follows. Catalyzes the GTP-dependent ribosomal translocation step during translation elongation. During this step, the ribosome changes from the pre-translocational (PRE) to the post-translocational (POST) state as the newly formed A-site-bound peptidyl-tRNA and P-site-bound deacylated tRNA move to the P and E sites, respectively. Catalyzes the coordinated movement of the two tRNA molecules, the mRNA and conformational changes in the ribosome. The chain is Elongation factor G 1 from Shewanella denitrificans (strain OS217 / ATCC BAA-1090 / DSM 15013).